Consider the following 365-residue polypeptide: Peptide chain release factor 2 (365 aa).

An N5-methylglutamine modification is found at glutamine 252.

Belongs to the prokaryotic/mitochondrial release factor family. Post-translationally, methylated by PrmC. Methylation increases the termination efficiency of RF2.

The protein resides in the cytoplasm. Peptide chain release factor 2 directs the termination of translation in response to the peptide chain termination codons UGA and UAA. The sequence is that of Peptide chain release factor 2 from Shewanella baltica (strain OS223).